A 577-amino-acid chain; its full sequence is Endopolyphosphatase (577 aa).

The Cytoplasmic segment spans residues 1–2 (MR). Residues 3-23 (PSVITVAVLFVQSTWASFAFG) traverse the membrane as a helical; Signal-anchor for type II membrane protein segment. Over 24–577 (NPMSMRNKAH…YIGSISDFED (554 aa)) the chain is Vacuolar. N-linked (GlcNAc...) asparagine glycosylation is found at asparagine 363, asparagine 370, asparagine 375, and asparagine 399. The tract at residues 430-460 (SDYEIDKKKKKKKKNNKKKKKNKRKNIKPGP) is disordered. Over residues 437–456 (KKKKKKKNNKKKKKNKRKNI) the composition is skewed to basic residues. The N-linked (GlcNAc...) asparagine glycan is linked to asparagine 481.

Belongs to the endopolyphosphatase PPN1 family. Requires a divalent metal cation as cofactor. In terms of processing, processing by proteases in the vacuole may be required for activation.

It localises to the vacuole membrane. It catalyses the reaction [phosphate](n+1) + n H2O = (n+1) phosphate + n H(+). Its function is as follows. Catalyzes the hydrolysis of inorganic polyphosphate (polyP) chains of many hundreds of phosphate residues into shorter lengths. The protein is Endopolyphosphatase (ppn1) of Schizosaccharomyces pombe (strain 972 / ATCC 24843) (Fission yeast).